We begin with the raw amino-acid sequence, 510 residues long: ATP synthase subunit alpha (510 aa).

169 to 176 (GDRQTGKT) is an ATP binding site.

The protein belongs to the ATPase alpha/beta chains family. As to quaternary structure, F-type ATPases have 2 components, CF(1) - the catalytic core - and CF(0) - the membrane proton channel. CF(1) has five subunits: alpha(3), beta(3), gamma(1), delta(1), epsilon(1). CF(0) has four main subunits: a(1), b(1), b'(1) and c(9-12).

The protein resides in the cell inner membrane. The enzyme catalyses ATP + H2O + 4 H(+)(in) = ADP + phosphate + 5 H(+)(out). In terms of biological role, produces ATP from ADP in the presence of a proton gradient across the membrane. The alpha chain is a regulatory subunit. The protein is ATP synthase subunit alpha of Rhodopseudomonas palustris (strain HaA2).